A 396-amino-acid chain; its full sequence is UDP-galactose translocator (396 aa).

10 helical membrane-spanning segments follow: residues 3-23 (AVGA…AGAL), 37-57 (YISL…IRYA), 65-85 (FFAT…CLLL), 97-117 (LVLF…KLAV), 140-160 (TFQV…VLML), 169-189 (WASL…QAGG), 200-220 (GAGL…GVYF), 238-258 (LGLF…GTAV), 269-289 (PAVW…AVVV), and 315-335 (LFGF…IGAV). The interval 358–379 (PCVHQQPPGQPPPPQLSSHRGD) is disordered. The ER retention motif signature appears at 392-396 (KVKGS).

The protein belongs to the nucleotide-sugar transporter family. SLC35A subfamily. As to quaternary structure, interacts with SLC35A3; the interaction is reduced in the presence of SLC35A4. Found in a complex with SLC35A3 and SLC35A4. In terms of assembly, interacts with B4GALT4.

It is found in the endoplasmic reticulum membrane. It localises to the golgi apparatus membrane. It catalyses the reaction UMP(out) + UDP-alpha-D-galactose(in) = UMP(in) + UDP-alpha-D-galactose(out). It carries out the reaction UDP-N-acetyl-alpha-D-galactosamine(in) + UMP(out) = UDP-N-acetyl-alpha-D-galactosamine(out) + UMP(in). The enzyme catalyses UMP(out) + UDP-alpha-D-glucose(in) = UMP(in) + UDP-alpha-D-glucose(out). The catalysed reaction is UMP(out) + UDP-N-acetyl-alpha-D-glucosamine(in) = UMP(in) + UDP-N-acetyl-alpha-D-glucosamine(out). It catalyses the reaction UDP-alpha-D-galactose(in) + AMP(out) = UDP-alpha-D-galactose(out) + AMP(in). It carries out the reaction UDP-alpha-D-galactose(in) + CMP(out) = UDP-alpha-D-galactose(out) + CMP(in). The enzyme catalyses UDP-N-acetyl-alpha-D-galactosamine(out) + UDP-alpha-D-galactose(in) = UDP-N-acetyl-alpha-D-galactosamine(in) + UDP-alpha-D-galactose(out). The catalysed reaction is UDP-N-acetyl-alpha-D-glucosamine(out) + UDP-alpha-D-galactose(in) = UDP-N-acetyl-alpha-D-glucosamine(in) + UDP-alpha-D-galactose(out). It catalyses the reaction UDP-alpha-D-galactose(in) + UDP-alpha-D-glucose(out) = UDP-alpha-D-galactose(out) + UDP-alpha-D-glucose(in). It carries out the reaction UMP(out) + CMP(in) = UMP(in) + CMP(out). The enzyme catalyses UMP(out) + AMP(in) = UMP(in) + AMP(out). Functionally, transports uridine diphosphate galactose (UDP-galactose) from the cytosol into the Golgi apparatus, functioning as an antiporter that exchanges UDP-galactose for UMP. It is also able to exchange UDP-galactose for AMP and CMP, and to transport UDP-N-acetylgalactosamine (UDP-GalNAc) and other nucleotide sugars. As a provider of UDP-galactose to galactosyltransferases present in the Golgi apparatus, it is necessary for globotriaosylceramide/globoside (Gb3Cer) synthesis from lactosylceramide. The sequence is that of UDP-galactose translocator from Homo sapiens (Human).